The primary structure comprises 160 residues: uncharacterized protein (160 aa).

The protein belongs to the Dps family.

This is an uncharacterized protein from Haemophilus influenzae (strain ATCC 51907 / DSM 11121 / KW20 / Rd).